A 136-amino-acid polypeptide reads, in one-letter code: Small ribosomal subunit protein uS8c (136 aa).

It belongs to the universal ribosomal protein uS8 family. In terms of assembly, part of the 30S ribosomal subunit.

Its subcellular location is the plastid. The protein resides in the chloroplast. One of the primary rRNA binding proteins, it binds directly to 16S rRNA central domain where it helps coordinate assembly of the platform of the 30S subunit. The chain is Small ribosomal subunit protein uS8c (rps8) from Citrus sinensis (Sweet orange).